Here is a 151-residue protein sequence, read N- to C-terminus: Major latex allergen Hev b 5 (151 aa).

The tract at residues 1 to 151 (MASVEVESAA…TEVPVEKTEE (151 aa)) is disordered. Ala2 is subject to N-acetylalanine. Positions 17-31 (ETPEVTKAEETKTEE) are enriched in basic and acidic residues. 2 stretches are compositionally biased toward low complexity: residues 36 to 45 (PASEQETADA) and 53 to 64 (TAAPAEPEAPAP). 3 stretches are compositionally biased toward basic and acidic residues: residues 65 to 80 (ETEK…KTEE), 103 to 113 (EEPKHETKETE), and 122 to 133 (EGEKPAEEEKPI). Positions 134-144 (TEAAETATTEV) are enriched in low complexity.

The protein to kiwi fruit protein PKIWI501. In terms of processing, the N-terminus is blocked.

The protein is Major latex allergen Hev b 5 of Hevea brasiliensis (Para rubber tree).